The primary structure comprises 771 residues: Protein lin-54 homolog (771 aa).

Disordered regions lie at residues Ala21 to Val44 and Thr68 to Leu105. Residues Ser72–Thr92 show a composition bias toward low complexity. Residues Ser288, Ser292, and Ser308 each carry the phosphoserine modification. Residues Pro544–Glu657 form the CRC domain. The interval Lys546–Tyr559 is DNA-binding. Cys548, Cys550, Cys555, Cys560, Cys562, Cys569, Cys572, Cys574, and Cys577 together coordinate Zn(2+). The tract at residues Ile606–Ser619 is linker. 9 residues coordinate Zn(2+): Cys622, Cys624, Cys629, Cys634, Cys636, Cys643, Cys647, Cys649, and Cys652. The segment at Cys622 to Glu635 is DNA-binding.

It belongs to the lin-54 family. In terms of assembly, component of the DREAM complex.

The protein resides in the nucleus. Its function is as follows. Component of the DREAM complex, a multiprotein complex that can both act as a transcription activator or repressor depending on the context. Specifically recognizes the consensus motif 5'-TTYRAA-3' in target DNA. In Danio rerio (Zebrafish), this protein is Protein lin-54 homolog (lin54).